Consider the following 71-residue polypeptide: GSRSSFSPTQAFLTLQQASSTPRTGGVGSYQFVREFVPEVYLNPFSGPPDTFPDQFIPNYDIVTNSVDGYD.

It belongs to the adenoviridae hexon-linking protein family. As to quaternary structure, interacts with the peripentonal hexons as well as the hexons in the facets. Part of a complex composed of the core-capsid bridging protein, the endosome lysis protein VI and the hexon-linking protein VIII; these interactions bridge the virus core to the capsid. In terms of processing, cleaved by the viral protease during virion maturation. May cause the middle segment to be shed from the capsid.

Its subcellular location is the host nucleus. The protein resides in the virion. Its function is as follows. Structural component of the virion that acts as a cement protein on the capsid interior and which glue the peripentonal hexons and group-of-nine hexons together. The polypeptide is Pre-hexon-linking protein VIII (Canine adenovirus serotype 1 (strain Glaxo) (CAdV-1)).